The chain runs to 171 residues: RxLR effector protein CRE7 (171 aa).

A signal peptide spans 1–23; it reads MRAIAILLAVVATIFASLHGVSA. The RxLR-dEER motif lies at 46–59; that stretch reads RRLRQTGDASDEER.

This sequence belongs to the RxLR effector family.

Its subcellular location is the secreted. It localises to the host cell. Its function is as follows. Effector that is involved in host plant infection. Contributes to virulence during the early infection stage, by inhibiting plant defense responses induced by both PAMP-triggered immunity (PTI) and effector-triggered immunity (ETI). This chain is RxLR effector protein CRE7, found in Phytophthora infestans (strain T30-4) (Potato late blight agent).